The primary structure comprises 352 residues: Biotin synthase (352 aa).

Residues 44-262 (NRVQVSTLLS…LAVARIMMPK (219 aa)) enclose the Radical SAM core domain. [4Fe-4S] cluster is bound by residues Cys-59, Cys-63, and Cys-66. The [2Fe-2S] cluster site is built by Cys-103, Cys-134, Cys-194, and Arg-266.

This sequence belongs to the radical SAM superfamily. Biotin synthase family. Homodimer. [4Fe-4S] cluster serves as cofactor. Requires [2Fe-2S] cluster as cofactor.

It carries out the reaction (4R,5S)-dethiobiotin + (sulfur carrier)-SH + 2 reduced [2Fe-2S]-[ferredoxin] + 2 S-adenosyl-L-methionine = (sulfur carrier)-H + biotin + 2 5'-deoxyadenosine + 2 L-methionine + 2 oxidized [2Fe-2S]-[ferredoxin]. Its pathway is cofactor biosynthesis; biotin biosynthesis; biotin from 7,8-diaminononanoate: step 2/2. Catalyzes the conversion of dethiobiotin (DTB) to biotin by the insertion of a sulfur atom into dethiobiotin via a radical-based mechanism. The chain is Biotin synthase from Pseudomonas aeruginosa (strain UCBPP-PA14).